The primary structure comprises 432 residues: MTTTIRQFTSSSSIKGSSGLGGGSSRTSCRLSGGLGAGSCRLGSAGGLGSTLGGSSYSSCYSFGSGGGYGSSFGGVDGLLAGGEKATMQNLNDRLASYLDKVRALEEANTELEVKIRDWYQRQAPGPARDYSQYYRTIEELQNKILTATVDNANILLQIDNARLAADDFRTKFETEQALRLSVEADINGLRRVLDELTLARADLEMQIENLKEELAYLKKNHEEEMNALRGQVGGEINVEMDAAPGVDLSRILNEMRDQYEKMAEKNRKDAEDWFFSKTEELNREVATNSELVQSGESEISELRRTMQALEIELQSQLSMKASLEGNLAETENRYCVQLSQIQGLIGSVEEQLAQLRCEMEQQNQEYKILLDVKTRLEQEIATYRRLLEGEDAHLTQYKKEPVTTRQVRTIVEEVQDGKVISSREQVHQTTR.

The disordered stretch occupies residues 1 to 24 (MTTTIRQFTSSSSIKGSSGLGGGS). Residues 1–83 (MTTTIRQFTS…GGVDGLLAGG (83 aa)) form a head region. Serine 12 and serine 13 each carry phosphoserine. Residue lysine 15 forms a Glycyl lysine isopeptide (Lys-Gly) (interchain with G-Cter in SUMO1); alternate linkage. Lysine 15 participates in a covalent cross-link: Glycyl lysine isopeptide (Lys-Gly) (interchain with G-Cter in SUMO2); alternate. 3 positions are modified to phosphoserine: serine 25, serine 32, and serine 39. At serine 44 the chain carries Phosphoserine; by RPS6KA1. A coil 1A region spans residues 84–120 (EKATMQNLNDRLASYLDKVRALEEANTELEVKIRDWY). The IF rod domain maps to 84–395 (EKATMQNLND…RLLEGEDAHL (312 aa)). A Phosphothreonine modification is found at threonine 110. Residues 121 to 138 (QRQAPGPARDYSQYYRTI) form a linker 1 region. The segment at 139–230 (EELQNKILTA…NHEEEMNALR (92 aa)) is coil 1B. The linker 12 stretch occupies residues 231–250 (GQVGGEINVEMDAAPGVDLS). The interval 251 to 392 (RILNEMRDQY…TYRRLLEGED (142 aa)) is coil 2. Lysine 278 participates in a covalent cross-link: Glycyl lysine isopeptide (Lys-Gly) (interchain with G-Cter in SUMO2). Threonine 279 is modified (phosphothreonine). Position 323 is a phosphoserine (serine 323). The interval 393 to 432 (AHLTQYKKEPVTTRQVRTIVEEVQDGKVISSREQVHQTTR) is tail. Residues lysine 399, lysine 400, and lysine 419 each participate in a glycyl lysine isopeptide (Lys-Gly) (interchain with G-Cter in SUMO1); alternate cross-link. Residues lysine 399, lysine 400, and lysine 419 each participate in a glycyl lysine isopeptide (Lys-Gly) (interchain with G-Cter in SUMO2); alternate cross-link.

The protein belongs to the intermediate filament family. In terms of assembly, heterodimer of a type I and a type II keratin. KRT17 associates with KRT6 isomers (KRT6A or KRT6B). Interacts with TRADD and SFN. Post-translationally, phosphorylation at Ser-44 occurs in a growth- and stress-dependent fashion in skin keratinocytes, it has no effect on filament organization.

The protein localises to the cytoplasm. In terms of biological role, type I keratin involved in the formation and maintenance of various skin appendages, specifically in determining shape and orientation of hair. Required for the correct growth of hair follicles, in particular for the persistence of the anagen (growth) state. Modulates the function of TNF-alpha in the specific context of hair cycling. Regulates protein synthesis and epithelial cell growth through binding to the adapter protein SFN and by stimulating Akt/mTOR pathway. Involved in tissue repair. May be a marker of basal cell differentiation in complex epithelia and therefore indicative of a certain type of epithelial 'stem cells'. Acts as a promoter of epithelial proliferation by acting a regulator of immune response in skin: promotes Th1/Th17-dominated immune environment contributing to the development of basaloid skin tumors. May act as an autoantigen in the immunopathogenesis of psoriasis, with certain peptide regions being a major target for autoreactive T-cells and hence causing their proliferation. The sequence is that of Keratin, type I cytoskeletal 17 from Pan troglodytes (Chimpanzee).